The primary structure comprises 253 residues: Oxidoreductase AOL_s00215g277 (253 aa).

Residues 181–203 (FFGYWLTVILGYYIGSLLGYQPF) form a helical membrane-spanning segment.

This sequence belongs to the oxidoreductase OpS7 family.

The protein localises to the membrane. It functions in the pathway secondary metabolite biosynthesis; terpenoid biosynthesis. In terms of biological role, oxidoreductase; part of the gene cluster that mediates the biosynthesis of sesquiterpenyl epoxy-cyclohexenoids (SECs) such as anthrobotrisins and arthrosporols, metabolites that possess a novel hybrid carbon skeleton consisting of a polyketide-derived epoxycyclohexenol combined with a terpenoid-derived monocyclic sesquiterpenol substructure (PKS-PTS hybrid). The SEC pathway plays an important role for fungal soil colonization via decreasing fungal nematode-capturing ability. Within the pathway, the oxidoreductase AOL_s00215g277 seems to play a role in the farnesylation step of toluquinol to produce farnesyl hydroquinone, the hybrid precursor for biosynthesis of SECs. The pathway begins with the biosynthesis of 6-methylsalicylic acid (6-MSA), the first precursor of the polyketide-derived epoxycyclohexenol in arthrosporols, by the polyketide synthase (PKS) AOL_s00215g283 via condensation of 1 acetate and 3 malonate units. The 6-methylsalicylic acid decarboxylase AOL_s00215g281 then catalyzes the decarboxylation of 6-methylsalicylic acid to yield m-cresol. The cytochrome P450 monooxygenase AOL_s00215g282 further oxidizes m-cresol to yield toluquinol. With the assistance of the oxidoreductase AOL_s00215g277, the polyprenyl transferase AOL_s00215g276 catalyzes the farnesylation of toluquinol to produce farnesyl hydroquinone, the hybrid precursor for biosynthesis of SECs. Farnesyl hydroquinone undergoes epoxidation and then subsequent dehydrogenation to form farnesyl epoxy-quinone, the first and simplest SEC. The cytochrome P450 monooxygenase AOL_s00215g278 and the FAD-dependent monooxygenase AOL_s00215g279 might be involved in the oxygenation of the phenol moiety, most likely in the epoxy formation. The cytochrome P450 monooxygenases AOL_s00215g274 and AOL_s00215g280 are involved in specific regional ketone reductions at respectively C-4 and C-1 of farnesyl epoxy-quinone PubMed:33823587. This is Oxidoreductase AOL_s00215g277 from Arthrobotrys oligospora (strain ATCC 24927 / CBS 115.81 / DSM 1491) (Nematode-trapping fungus).